A 155-amino-acid chain; its full sequence is Cytochrome c-type biogenesis protein CcmE (155 aa).

Over Met-1 to Arg-8 the chain is Cytoplasmic. A helical; Signal-anchor for type II membrane protein transmembrane segment spans residues Leu-9–Ala-29. Topologically, residues Leu-30–Ser-155 are periplasmic. Positions 124 and 128 each coordinate heme.

This sequence belongs to the CcmE/CycJ family.

The protein resides in the cell inner membrane. Functionally, heme chaperone required for the biogenesis of c-type cytochromes. Transiently binds heme delivered by CcmC and transfers the heme to apo-cytochromes in a process facilitated by CcmF and CcmH. In Teredinibacter turnerae (strain ATCC 39867 / T7901), this protein is Cytochrome c-type biogenesis protein CcmE.